The chain runs to 267 residues: Glucosamine-6-phosphate deaminase (267 aa).

Aspartate 72 (proton acceptor; for enolization step) is an active-site residue. Aspartate 141 serves as the catalytic For ring-opening step. Histidine 143 acts as the Proton acceptor; for ring-opening step in catalysis. The For ring-opening step role is filled by glutamate 148.

It belongs to the glucosamine/galactosamine-6-phosphate isomerase family. NagB subfamily.

It catalyses the reaction alpha-D-glucosamine 6-phosphate + H2O = beta-D-fructose 6-phosphate + NH4(+). The protein operates within amino-sugar metabolism; N-acetylneuraminate degradation; D-fructose 6-phosphate from N-acetylneuraminate: step 5/5. With respect to regulation, allosterically activated by N-acetylglucosamine 6-phosphate (GlcNAc6P). Catalyzes the reversible isomerization-deamination of glucosamine 6-phosphate (GlcN6P) to form fructose 6-phosphate (Fru6P) and ammonium ion. The protein is Glucosamine-6-phosphate deaminase of Borrelia hermsii (strain HS1 / DAH).